The chain runs to 735 residues: MPLSRTLSVSSLPGLEDWEDEFDLENSVLFEVAWEVANKVGGIYTVLQTKAKVTGDEWGDNYFLVGPYTEQGVRTQVELLEPPTPALKRTLDSMNSKGCKVYFGRWLIEGGPLVVLLDVGASAWALERWKGELWDTCNIGVPWYDREANDAVLFGFLTTWFLGEFLAQNEEKPHVVAHFHEWLAGIGLCLCRARRLPVATIFTTHATLLGRYLCAGAVDFYNNLENFNVDKEAGERQIYHRYCMERAAAHCAHVFTTVSQITAIEAQHLLKRKPDIVTPNGLNVKKFSAMHEFQNLHAQSKARIQEFVRGHFYGHLDFNLDKTLYFFIAGRYEFSNKGADVFLEALARLNYLLRVNGSEQTVVAFFIMPARTNNFNVETLKGQAVRKQLWDTANTVKEKFGRKLYESLLVGSLPDMNKMLDKEDFTMMKRAIFATQRQSFPPVCTHNMLDDSSDPILTTIRRIGLFNSSADRVKVIFHPEFLSSTSPLLPVDYEEFVRGCHLGVFPSYYEPWGYTPAECTVMGIPSISTNLSGFGCFMEEHIADPSAYGIYILDRRFRSLDDSCSQLTSFLYSFCQQSRRQRIIQRNRTERLSDLLDWKYLGRYYMSARHMALAKAFPDHFTYEPHEADATQGYRYPRPASVPPSPSLSRHSSPHQSEDEEEPRDGLPEEDGERYDEDEEAAKDRRNIRAPEWPRRASCTSSSGGSKRSNSVDTSSLSTPSEPLSPASSLGEERN.

Position 8 is a phosphoserine; by AMPK and PKA (S8). S11 bears the Phosphoserine mark. K39 contributes to the UDP binding site. Residues H205 and R211 each coordinate UDP-alpha-D-glucose. Residues H291, E292, Q294, H297, and K301 each contribute to the alpha-D-glucose 6-phosphate site. Residue R331 coordinates UDP. R331 is a UDP-alpha-D-glucose binding site. Position 412 is a phosphoserine (S412). H501 is a binding site for alpha-D-glucose 6-phosphate. Residues E510, W512, and G513 each coordinate UDP-alpha-D-glucose. T515 provides a ligand contact to UDP. Alpha-D-glucose 6-phosphate-binding residues include R582 and R586. Residues 629–735 (DATQGYRYPR…PASSLGEERN (107 aa)) are disordered. S641 carries the post-translational modification Phosphoserine; by DYRK2, GSK3-alpha, GSK3-beta and PASK. Phosphoserine; by GSK3-alpha and GSK3-beta occurs at positions 645 and 649. The residue at position 652 (S652) is a Phosphoserine. S653 bears the Phosphoserine; by GSK3-alpha and GSK3-beta mark. S657 bears the Phosphoserine; by CK2 mark. The segment covering 658 to 681 (EDEEEPRDGLPEEDGERYDEDEEA) has biased composition (acidic residues). A compositionally biased stretch (basic and acidic residues) spans 682 to 695 (AKDRRNIRAPEWPR). S698 carries the phosphoserine modification. Low complexity predominate over residues 698 to 735 (SCTSSSGGSKRSNSVDTSSLSTPSEPLSPASSLGEERN). T700 is modified (phosphothreonine). Phosphoserine occurs at positions 709 and 711. T719 bears the Phosphothreonine mark. 2 positions are modified to phosphoserine: S725 and S729.

It belongs to the glycosyltransferase 3 family. In terms of assembly, part of the GYS1-GYG1 complex, a heterooctamer composed of a tetramer of GYS1 and 2 dimers of GYG1, where each GYS1 protomer binds to one GYG1 subunit (via GYG1 C-terminus); the GYS1 tetramer may dissociate from GYG1 dimers to continue glycogen polymerization on its own. In terms of processing, phosphorylation at Ser-8 is required for modification of Ser-11 by casein kinase I. Phosphorylated at Ser-641 by PASK, leading to inactivation; phosphorylation by PASK is inhibited by glycogen. Dephosphorylation at Ser-641 and Ser-645 by PP1 activates the enzyme. Phosphorylation at Ser-8 by AMPK inactivates the enzyme activity. Phosphorylated at Ser-641 by DYRK2, leading to inactivation. Primed phosphorylation at Ser-657 (site 5) by CSNK2A1 and CSNK2A2 is required for inhibitory phosphorylation at Ser-641 (site 3a), Ser-645 (site 3b), Ser-649 (site 3c) and Ser-653 (site 4) by GSK3A and GSK3B.

The catalysed reaction is [(1-&gt;4)-alpha-D-glucosyl](n) + UDP-alpha-D-glucose = [(1-&gt;4)-alpha-D-glucosyl](n+1) + UDP + H(+). It participates in glycan biosynthesis; glycogen biosynthesis. With respect to regulation, allosteric activation by glucose-6-phosphate. Phosphorylation reduces the activity towards UDP-glucose. When in the non-phosphorylated state, glycogen synthase does not require glucose-6-phosphate as an allosteric activator; when phosphorylated it does. Glycogen synthase participates in the glycogen biosynthetic process along with glycogenin and glycogen branching enzyme. Extends the primer composed of a few glucose units formed by glycogenin by adding new glucose units to it. In this context, glycogen synthase transfers the glycosyl residue from UDP-Glc to the non-reducing end of alpha-1,4-glucan. The polypeptide is Glycogen [starch] synthase, muscle (Oryctolagus cuniculus (Rabbit)).